The following is a 341-amino-acid chain: Phosphoribosylformylglycinamidine cyclo-ligase (341 aa).

It belongs to the AIR synthase family.

The protein resides in the cytoplasm. The catalysed reaction is 2-formamido-N(1)-(5-O-phospho-beta-D-ribosyl)acetamidine + ATP = 5-amino-1-(5-phospho-beta-D-ribosyl)imidazole + ADP + phosphate + H(+). It participates in purine metabolism; IMP biosynthesis via de novo pathway; 5-amino-1-(5-phospho-D-ribosyl)imidazole from N(2)-formyl-N(1)-(5-phospho-D-ribosyl)glycinamide: step 2/2. The polypeptide is Phosphoribosylformylglycinamidine cyclo-ligase (Synechocystis sp. (strain ATCC 27184 / PCC 6803 / Kazusa)).